Here is a 396-residue protein sequence, read N- to C-terminus: Na(+)/H(+) antiporter NhaA (396 aa).

11 helical membrane-spanning segments follow: residues 16–36, 59–79, 95–115, 124–144, 154–174, 178–198, 213–233, 254–274, 278–298, 328–348, and 363–383; these read GIIL…GLAG, LLLW…GLEV, TFPA…YAFF, AGWA…MALL, VFLL…IALF, QLSL…LWMN, LVLW…GVIV, ALHP…NAGV, GIGL…GLFI, IFAV…IASL, and LGIL…LRIA.

Belongs to the NhaA Na(+)/H(+) (TC 2.A.33) antiporter family.

Its subcellular location is the cell inner membrane. It catalyses the reaction Na(+)(in) + 2 H(+)(out) = Na(+)(out) + 2 H(+)(in). In terms of biological role, na(+)/H(+) antiporter that extrudes sodium in exchange for external protons. This chain is Na(+)/H(+) antiporter NhaA, found in Aeromonas hydrophila subsp. hydrophila (strain ATCC 7966 / DSM 30187 / BCRC 13018 / CCUG 14551 / JCM 1027 / KCTC 2358 / NCIMB 9240 / NCTC 8049).